Reading from the N-terminus, the 549-residue chain is Small ribosomal subunit protein bS1 (549 aa).

6 consecutive S1 motif domains span residues 21-87, 105-171, 192-260, 277-347, 364-434, and 451-512; these read GSIV…LSRE, KATV…VSRR, GSEV…LGLK, NSKL…LGLK, GDKV…LGIK, and GAVV…LSVK.

This sequence belongs to the bacterial ribosomal protein bS1 family.

Functionally, binds mRNA; thus facilitating recognition of the initiation point. It is needed to translate mRNA with a short Shine-Dalgarno (SD) purine-rich sequence. The chain is Small ribosomal subunit protein bS1 (rpsA) from Haemophilus influenzae (strain ATCC 51907 / DSM 11121 / KW20 / Rd).